Consider the following 231-residue polypeptide: Red fluorescent protein eqFP611 (231 aa).

The segment at residues Met-63–Gly-65 is a cross-link (2-iminomethyl-5-imidazolinone (Met-Gly)). Position 64 is a (E)-2,3-didehydrotyrosine (Tyr-64).

The protein belongs to the GFP family. As to quaternary structure, monomer. Post-translationally, contains a chromophore consisting of modified amino acid residues. The chromophore is formed by autocatalytic backbone condensation between Xaa-N and Gly-(N+2), oxidation of Tyr-(N+1) to didehydrotyrosine, and formation of a double bond to the alpha-amino nitrogen of residue Xaa-N. Maturation of the chromophore requires nothing other than molecular oxygen.

In terms of biological role, pigment protein. This chain is Red fluorescent protein eqFP611, found in Entacmaea quadricolor (Bubble-tip anemone).